Reading from the N-terminus, the 306-residue chain is NADH-cytochrome b5 reductase 2-B (306 aa).

Residues 12–32 (PLLLSSGIAVTAAAAVYFSTG) traverse the membrane as a helical segment. The 105-residue stretch at 53 to 157 (STWVDLPLVK…TGPIVKYEWK (105 aa)) folds into the FAD-binding FR-type domain. 160 to 195 (KFDSVTLLGAGSGITPLYQLMGSILSNPEDKTKINL) contributes to the FAD binding site.

The protein belongs to the flavoprotein pyridine nucleotide cytochrome reductase family. FAD is required as a cofactor.

The protein resides in the mitochondrion outer membrane. The catalysed reaction is 2 Fe(III)-[cytochrome b5] + NADH = 2 Fe(II)-[cytochrome b5] + NAD(+) + H(+). Its function is as follows. May mediate the reduction of outer membrane cytochrome b5. This chain is NADH-cytochrome b5 reductase 2-B (MCR1B), found in Vanderwaltozyma polyspora (strain ATCC 22028 / DSM 70294 / BCRC 21397 / CBS 2163 / NBRC 10782 / NRRL Y-8283 / UCD 57-17) (Kluyveromyces polysporus).